A 565-amino-acid chain; its full sequence is Bifunctional dihydrofolate reductase-thymidylate synthase 2 (565 aa).

Positions 65–242 constitute a DHFR domain; sequence TYQVVVAATK…LRFSFTTHVR (178 aa). A substrate-binding site is contributed by Val69. NADP(+) contacts are provided by residues Ala71 and 77–83; that span reads GIGKDGK. Residue Asp91 participates in substrate binding. NADP(+) is bound by residues 115–117 and 136–139; these read RKT and LSRS. Substrate is bound at residue Ile178. 179–186 lines the NADP(+) pocket; that stretch reads GGGDILRE. Thr199 is a substrate binding site. Positions 245–280 are hinge; it reads SSSAGEASDESDGSKVLQVDWKKFSSVLPKMIFDRH. Residues 281–565 are thymidylate synthase; the sequence is EEYLYLNLVK…HKKIDMKMAV (285 aa). Arg302 provides a ligand contact to dUMP. The active site involves Cys447. DUMP-binding positions include His448, 466–470, Asn478, and 508–510; these read QRSAD and HVY.

In the N-terminal section; belongs to the dihydrofolate reductase family. It in the C-terminal section; belongs to the thymidylate synthase family. In terms of assembly, heterodimer or homodimer.

It catalyses the reaction (6S)-5,6,7,8-tetrahydrofolate + NADP(+) = 7,8-dihydrofolate + NADPH + H(+). The enzyme catalyses dUMP + (6R)-5,10-methylene-5,6,7,8-tetrahydrofolate = 7,8-dihydrofolate + dTMP. Its pathway is cofactor biosynthesis; tetrahydrofolate biosynthesis; 5,6,7,8-tetrahydrofolate from 7,8-dihydrofolate: step 1/1. In terms of biological role, bifunctional enzyme. Involved in de novo dTMP biosynthesis. Key enzyme in folate metabolism. Can play two different roles depending on the source of dihydrofolate: de novo synthesis of tetrahydrofolate or recycling of the dihydrofolate released as one of the end products of the TS catalyzed reaction. Catalyzes an essential reaction for de novo glycine and purine synthesis, DNA precursor synthesis, and for the conversion of dUMP to dTMP. The chain is Bifunctional dihydrofolate reductase-thymidylate synthase 2 (THY-2) from Arabidopsis thaliana (Mouse-ear cress).